The primary structure comprises 121 residues: uncharacterized protein (121 aa).

This is an uncharacterized protein from Aquifex aeolicus (strain VF5).